Consider the following 1267-residue polypeptide: Clustered mitochondria protein homolog (1267 aa).

TPR repeat units follow at residues 64–102 (YNLK…KPYN), 420–453 (YSFV…LNML), 716–749 (EAHE…MIKE), 795–830 (LVPL…IPAL), 904–939 (RSIC…KSRA), 1010–1043 (AEKY…YERV), and 1138–1171 (AYIK…FTKE). Residues 329 to 586 (PTNGPDYLRT…NTYPLDVEFA (258 aa)) enclose the Clu domain. Positions 1203-1219 (QQDQTAASGLKQQPQKS) are enriched in polar residues. The interval 1203 to 1267 (QQDQTAASGL…KSKSKGKNKK (65 aa)) is disordered. Over residues 1224–1239 (NKKETTNPDLADKSVD) the composition is skewed to basic and acidic residues. Over residues 1254–1267 (KTTKKSKSKGKNKK) the composition is skewed to basic residues.

The protein belongs to the CLU family. As to quaternary structure, may associate with the eukaryotic translation initiation factor 3 (eIF-3) complex.

It is found in the cytoplasm. MRNA-binding protein involved in proper cytoplasmic distribution of mitochondria. The protein is Clustered mitochondria protein homolog of Candida glabrata (strain ATCC 2001 / BCRC 20586 / JCM 3761 / NBRC 0622 / NRRL Y-65 / CBS 138) (Yeast).